Consider the following 130-residue polypeptide: Small ribosomal subunit protein uS11 (130 aa).

The protein belongs to the universal ribosomal protein uS11 family. As to quaternary structure, part of the 30S ribosomal subunit. Interacts with proteins S7 and S18. Binds to IF-3.

Its function is as follows. Located on the platform of the 30S subunit, it bridges several disparate RNA helices of the 16S rRNA. Forms part of the Shine-Dalgarno cleft in the 70S ribosome. In Prochlorococcus marinus (strain MIT 9303), this protein is Small ribosomal subunit protein uS11.